The sequence spans 193 residues: ATP-dependent Clp protease proteolytic subunit (193 aa).

Ser-98 acts as the Nucleophile in catalysis. His-123 is an active-site residue.

The protein belongs to the peptidase S14 family. As to quaternary structure, fourteen ClpP subunits assemble into 2 heptameric rings which stack back to back to give a disk-like structure with a central cavity, resembling the structure of eukaryotic proteasomes.

It localises to the cytoplasm. It catalyses the reaction Hydrolysis of proteins to small peptides in the presence of ATP and magnesium. alpha-casein is the usual test substrate. In the absence of ATP, only oligopeptides shorter than five residues are hydrolyzed (such as succinyl-Leu-Tyr-|-NHMec, and Leu-Tyr-Leu-|-Tyr-Trp, in which cleavage of the -Tyr-|-Leu- and -Tyr-|-Trp bonds also occurs).. In terms of biological role, cleaves peptides in various proteins in a process that requires ATP hydrolysis. Has a chymotrypsin-like activity. Plays a major role in the degradation of misfolded proteins. This chain is ATP-dependent Clp protease proteolytic subunit, found in Lachnospira eligens (strain ATCC 27750 / DSM 3376 / VPI C15-48 / C15-B4) (Eubacterium eligens).